The sequence spans 294 residues: 4-hydroxy-tetrahydrodipicolinate synthase (294 aa).

Position 47 (threonine 47) interacts with pyruvate. Tyrosine 135 functions as the Proton donor/acceptor in the catalytic mechanism. Lysine 163 serves as the catalytic Schiff-base intermediate with substrate. Valine 205 lines the pyruvate pocket.

Belongs to the DapA family. Homotetramer; dimer of dimers.

It is found in the cytoplasm. The enzyme catalyses L-aspartate 4-semialdehyde + pyruvate = (2S,4S)-4-hydroxy-2,3,4,5-tetrahydrodipicolinate + H2O + H(+). Its pathway is amino-acid biosynthesis; L-lysine biosynthesis via DAP pathway; (S)-tetrahydrodipicolinate from L-aspartate: step 3/4. In terms of biological role, catalyzes the condensation of (S)-aspartate-beta-semialdehyde [(S)-ASA] and pyruvate to 4-hydroxy-tetrahydrodipicolinate (HTPA). The chain is 4-hydroxy-tetrahydrodipicolinate synthase from Rickettsia bellii (strain RML369-C).